The primary structure comprises 45 residues: Large ribosomal subunit protein bL34 (45 aa).

Positions 1–27 (MTKRTLGGTSRKRKRVSGFRVRMRTHT) are disordered. Over residues 10–27 (SRKRKRVSGFRVRMRTHT) the composition is skewed to basic residues.

Belongs to the bacterial ribosomal protein bL34 family.

In Prochlorococcus marinus (strain MIT 9211), this protein is Large ribosomal subunit protein bL34.